A 1192-amino-acid polypeptide reads, in one-letter code: Chromosome partition protein Smc (1192 aa).

Proline 31–asparagine 38 provides a ligand contact to ATP. Coiled-coil stretches lie at residues alanine 164–valine 197, leucine 234–leucine 292, serine 333–glutamate 369, and glutamate 396–valine 464. In terms of domain architecture, SMC hinge spans lysine 522–glycine 636. Coiled-coil stretches lie at residues arginine 676–histidine 736, glutamate 772–alanine 902, and glycine 986–aspartate 1030.

Belongs to the SMC family. As to quaternary structure, homodimer.

The protein localises to the cytoplasm. Required for chromosome condensation and partitioning. The sequence is that of Chromosome partition protein Smc from Rhodopirellula baltica (strain DSM 10527 / NCIMB 13988 / SH1).